Reading from the N-terminus, the 54-residue chain is Hydrophobic protein RCI2A (54 aa).

2 helical membrane-spanning segments follow: residues 2-22 (STAT…GVFL) and 32-52 (ICLV…IYVL).

This sequence belongs to the UPF0057 (PMP3) family.

It is found in the membrane. This chain is Hydrophobic protein RCI2A (RCI2A), found in Arabidopsis thaliana (Mouse-ear cress).